A 361-amino-acid chain; its full sequence is GTP 3',8-cyclase (361 aa).

The segment at Met-1–Pro-30 is disordered. The span at Gly-16–Pro-30 shows a compositional bias: low complexity. Residues Thr-34 to Asp-252 enclose the Radical SAM core domain. Arg-43 is a binding site for GTP. [4Fe-4S] cluster is bound by residues Cys-50 and Cys-54. Residue Tyr-56 participates in S-adenosyl-L-methionine binding. Cys-57 contacts [4Fe-4S] cluster. Arg-94 contacts GTP. Gly-98 serves as a coordination point for S-adenosyl-L-methionine. A GTP-binding site is contributed by Thr-125. Position 149 (Ser-149) interacts with S-adenosyl-L-methionine. Lys-186 is a binding site for GTP. Met-220 serves as a coordination point for S-adenosyl-L-methionine. Residues Cys-288 and Cys-291 each coordinate [4Fe-4S] cluster. Residue Arg-293–Arg-295 coordinates GTP. Cys-305 is a [4Fe-4S] cluster binding site.

This sequence belongs to the radical SAM superfamily. MoaA family. In terms of assembly, monomer and homodimer. [4Fe-4S] cluster serves as cofactor.

It catalyses the reaction GTP + AH2 + S-adenosyl-L-methionine = (8S)-3',8-cyclo-7,8-dihydroguanosine 5'-triphosphate + 5'-deoxyadenosine + L-methionine + A + H(+). Its pathway is cofactor biosynthesis; molybdopterin biosynthesis. In terms of biological role, catalyzes the cyclization of GTP to (8S)-3',8-cyclo-7,8-dihydroguanosine 5'-triphosphate. The protein is GTP 3',8-cyclase of Mycolicibacterium smegmatis (strain ATCC 700084 / mc(2)155) (Mycobacterium smegmatis).